The following is a 161-amino-acid chain: Putative allophycocyanin subunit alpha 2 (161 aa).

Residue Asn71 is modified to N4-methylasparagine. Cys81 is a binding site for (2R,3E)-phycocyanobilin.

It belongs to the phycobiliprotein family. Heterohexamer of two alpha chains, one alpha-B chain and three beta chains. Contains one covalently linked phycocyanobilin chromophore. The chromophore is added by phycocyanobilin lyase CpcS 1.

Its subcellular location is the cellular thylakoid membrane. Its function is as follows. Light-harvesting photosynthetic bile pigment-protein from the phycobiliprotein complex. Allophycocyanin has a maximum absorption at approximately 650 to 653 nanometers. The sequence is that of Putative allophycocyanin subunit alpha 2 (apcA2) from Nostoc sp. (strain PCC 7120 / SAG 25.82 / UTEX 2576).